Here is a 254-residue protein sequence, read N- to C-terminus: Phosphoglycerate mutase 1 (254 aa).

Substrate is bound by residues R10 to N17 and S23 to G24. Catalysis depends on H11, which acts as the Tele-phosphohistidine intermediate. A phosphoserine mark is found at S14 and S23. A Phosphotyrosine modification is found at Y26. Residue S31 is modified to Phosphoserine. Substrate contacts are provided by residues R62, E89–Y92, and K100. E89 (proton donor/acceptor) is an active-site residue. Position 106 is an N6-acetyllysine (K106). R116 to R117 provides a ligand contact to substrate. Residue S118 is modified to Phosphoserine. G187–N188 is a substrate binding site. An N6-acetyllysine; alternate modification is found at K251. K251 is subject to N6-succinyllysine; alternate. N6-acetyllysine occurs at positions 253 and 254.

Belongs to the phosphoglycerate mutase family. BPG-dependent PGAM subfamily. Homodimer. Post-translationally, acetylated at Lys-253, Lys-253 and Lys-254 under high glucose condition. Acetylation increases catalytic activity. Under glucose restriction SIRT1 levels dramatically increase and it deacetylates the enzyme.

The catalysed reaction is (2R)-2-phosphoglycerate = (2R)-3-phosphoglycerate. It catalyses the reaction (2R)-3-phospho-glyceroyl phosphate = (2R)-2,3-bisphosphoglycerate + H(+). In terms of biological role, catalyzes the interconversion of 2-phosphoglycerate and 3-phosphoglyceratea crucial step in glycolysis, by using 2,3-bisphosphoglycerate. Also catalyzes the interconversion of (2R)-2,3-bisphosphoglycerate and (2R)-3-phospho-glyceroyl phosphate. This is Phosphoglycerate mutase 1 from Pongo abelii (Sumatran orangutan).